A 227-amino-acid polypeptide reads, in one-letter code: MTIELKPGGLLIAIEGIDGAGKTTLARRLTTTLEAAGARVVLSKEPTNGPWGTKLRQSAATGRLSADEEAELLIRDRHEHVDTLIAPALARGDIVILDRYFPSMVAYQGAAGLPLDELLELNAFAPRPDVLLLLDLPPPTGLARIRARGDAPNHFETQDNLERCRTIFAGLELPGKHVVDASADADSVLRQAHAIIVAALADRLSGDGAPADTGKAALELLSAGRPA.

Residue 16–23 (GIDGAGKT) participates in ATP binding.

Belongs to the thymidylate kinase family.

It catalyses the reaction dTMP + ATP = dTDP + ADP. In terms of biological role, phosphorylation of dTMP to form dTDP in both de novo and salvage pathways of dTTP synthesis. In Xanthomonas oryzae pv. oryzae (strain MAFF 311018), this protein is Thymidylate kinase.